The sequence spans 92 residues: Small ribosomal subunit protein uS19 (92 aa).

The protein belongs to the universal ribosomal protein uS19 family.

In terms of biological role, protein S19 forms a complex with S13 that binds strongly to the 16S ribosomal RNA. The polypeptide is Small ribosomal subunit protein uS19 (Photorhabdus laumondii subsp. laumondii (strain DSM 15139 / CIP 105565 / TT01) (Photorhabdus luminescens subsp. laumondii)).